The chain runs to 4639 residues: Dynein heavy chain, cytoplasmic (4639 aa).

The tract at residues 1–1856 (MGDSLENPDT…TIHMANARFF (1856 aa)) is stem. Coiled-coil stretches lie at residues 530–565 (LDITKEGSEAWEAAVKRYEEKIDRVETRITAHLRDQ), 774–794 (SLIESVRTYERTLEKIEDRAS), and 1264–1368 (DDAL…ARLR). AAA regions lie at residues 1857–2084 (YGFE…VLIS), 2166–2437 (EEIR…FTRL), 2541–2790 (EVET…WVRG), and 2884–3153 (VFYE…GGRT). Residues 1895 to 1902 (GPAGTGKT), 2210 to 2217 (GPSGSGKS), 2580 to 2587 (GPPGSGKT), and 2922 to 2929 (GVSGAGKT) each bind ATP. 3 coiled-coil regions span residues 3189-3261 (GLNK…EKRK), 3382-3478 (AIAQ…WEST), and 3723-3782 (EFRL…EIET). A stalk region spans residues 3189–3478 (GLNKIAETVE…NIERERWEST (290 aa)). 2 AAA regions span residues 3539 to 3768 (LSNP…DINQ) and 3989 to 4205 (AHNV…TLDT).

This sequence belongs to the dynein heavy chain family. Consists of at least two heavy chains and a number of intermediate and light chains.

The protein localises to the cytoplasm. It localises to the cytoskeleton. Cytoplasmic dynein acts as a motor for the intracellular retrograde motility of vesicles and organelles along microtubules. Dynein has ATPase activity; the force-producing power stroke is thought to occur on release of ADP. This Drosophila melanogaster (Fruit fly) protein is Dynein heavy chain, cytoplasmic (Dhc64C).